Consider the following 100-residue polypeptide: MFAVIQTGGKQYKVASGDVIRVEKLAGEAGAEVVLDQVLMVGDKIGVPVVAGASVKATVVAQARGEKIIVFKKRRRQNSRRKNGHRQDLTILRITDISAG.

This sequence belongs to the bacterial ribosomal protein bL21 family. In terms of assembly, part of the 50S ribosomal subunit. Contacts protein L20.

In terms of biological role, this protein binds to 23S rRNA in the presence of protein L20. This Paramagnetospirillum magneticum (strain ATCC 700264 / AMB-1) (Magnetospirillum magneticum) protein is Large ribosomal subunit protein bL21.